The sequence spans 252 residues: tRNA1(Val) (adenine(37)-N6)-methyltransferase (252 aa).

This sequence belongs to the methyltransferase superfamily. tRNA (adenine-N(6)-)-methyltransferase family.

The protein resides in the cytoplasm. The enzyme catalyses adenosine(37) in tRNA1(Val) + S-adenosyl-L-methionine = N(6)-methyladenosine(37) in tRNA1(Val) + S-adenosyl-L-homocysteine + H(+). Specifically methylates the adenine in position 37 of tRNA(1)(Val) (anticodon cmo5UAC). The polypeptide is tRNA1(Val) (adenine(37)-N6)-methyltransferase (Yersinia pseudotuberculosis serotype IB (strain PB1/+)).